Consider the following 255-residue polypeptide: 3-oxoacyl-[acyl-carrier-protein] reductase MabA (255 aa).

NADP(+) contacts are provided by residues Asn32–Ile35, Arg55, Asp69–Val70, Gly98, Tyr161, Lys165, Ile194, and Arg205. Catalysis depends on Tyr161, which acts as the Proton acceptor.

It belongs to the short-chain dehydrogenases/reductases (SDR) family. In terms of assembly, homotetramer.

The protein resides in the secreted. It is found in the cell wall. It catalyses the reaction a (3R)-hydroxyacyl-[ACP] + NADP(+) = a 3-oxoacyl-[ACP] + NADPH + H(+). The enzyme catalyses a (3R)-3-hydroxyacyl-CoA + NADP(+) = a 3-oxoacyl-CoA + NADPH + H(+). The catalysed reaction is (3R)-3-hydroxybutanoyl-CoA + NADP(+) = acetoacetyl-CoA + NADPH + H(+). It carries out the reaction (3R)-hydroxyoctanoyl-CoA + NADP(+) = 3-oxooctanoyl-CoA + NADPH + H(+). It functions in the pathway lipid metabolism; mycolic acid biosynthesis. In terms of biological role, part of the mycobacterial fatty acid elongation system FAS-II, which is involved in mycolic acid biosynthesis. Catalyzes the NADPH-dependent reduction of beta-ketoacyl derivatives, the second step of the FAS-II elongation cycle. Has a preference for longer substrates. Can use CoA derivatives as substrates in vitro. This is 3-oxoacyl-[acyl-carrier-protein] reductase MabA from Mycolicibacterium smegmatis (strain ATCC 700084 / mc(2)155) (Mycobacterium smegmatis).